Reading from the N-terminus, the 383-residue chain is Meiotically up-regulated gene 93 protein (383 aa).

One copy of the TPR repeat lies at Lys75–Asn108.

It localises to the cytoplasm. Its subcellular location is the nucleus. Functionally, has a role in meiosis. The sequence is that of Meiotically up-regulated gene 93 protein (mug93) from Schizosaccharomyces pombe (strain 972 / ATCC 24843) (Fission yeast).